A 370-amino-acid chain; its full sequence is Proline-rich protein 5-like (370 aa).

S28 is subject to Phosphoserine. The disordered stretch occupies residues 327–370 (PTFPPPHRQCSSEPSILDSPDEMELEDVASGSQEDSELNCASLS).

Belongs to the PROTOR family. Interacts with the mammalian target of rapamycin complex 2 (mTORC2) which contains MTOR, MLST8, PRR5, RICTOR, MAPKAP1 and DEPTOR. Interacts with RFFL. Interacts (via C-terminus) with ZFP36 (via C-terminus); this interaction may accelerate ZFP36-mediated mRNA decay during stress. Interacts with RICTOR. In terms of processing, ubiquitinated. Ubiquitination by RFFL promotes proteasomal degradation of PRR5L thereby modifying the substrate-specific activity of the mTORC2 complex. Ubiquitination by RFFL is stimulated by LPA/lysophosphatidic acid.

Functionally, associates with the mTORC2 complex that regulates cellular processes including survival and organization of the cytoskeleton. Regulates the activity of the mTORC2 complex in a substrate-specific manner preventing for instance the specific phosphorylation of PKCs and thereby controlling cell migration. Plays a role in the stimulation of ZFP36-mediated mRNA decay of several ZFP36-associated mRNAs, such as TNF-alpha and GM-CSF, in response to stress. Required for ZFP36 localization to cytoplasmic stress granule (SG) and P-body (PB) in response to stress. The sequence is that of Proline-rich protein 5-like (Prr5l) from Rattus norvegicus (Rat).